A 59-amino-acid polypeptide reads, in one-letter code: uncharacterized protein (59 aa).

This is an uncharacterized protein from Sulfolobus islandicus rod-shaped virus 1 (SIRV-1).